A 239-amino-acid chain; its full sequence is NAD(P)H-quinone oxidoreductase subunit K, chloroplastic (239 aa).

4 residues coordinate [4Fe-4S] cluster: Cys43, Cys44, Cys108, and Cys139. The interval 217–239 (KSSVSSRELGNESGKEDVSIQNK) is disordered. Residues 225–239 (LGNESGKEDVSIQNK) show a composition bias toward basic and acidic residues.

It belongs to the complex I 20 kDa subunit family. As to quaternary structure, NDH is composed of at least 16 different subunits, 5 of which are encoded in the nucleus. Requires [4Fe-4S] cluster as cofactor.

It is found in the plastid. The protein localises to the chloroplast thylakoid membrane. It carries out the reaction a plastoquinone + NADH + (n+1) H(+)(in) = a plastoquinol + NAD(+) + n H(+)(out). The enzyme catalyses a plastoquinone + NADPH + (n+1) H(+)(in) = a plastoquinol + NADP(+) + n H(+)(out). Its function is as follows. NDH shuttles electrons from NAD(P)H:plastoquinone, via FMN and iron-sulfur (Fe-S) centers, to quinones in the photosynthetic chain and possibly in a chloroplast respiratory chain. The immediate electron acceptor for the enzyme in this species is believed to be plastoquinone. Couples the redox reaction to proton translocation, and thus conserves the redox energy in a proton gradient. This chain is NAD(P)H-quinone oxidoreductase subunit K, chloroplastic, found in Acorus calamus var. americanus (American sweet flag).